A 528-amino-acid polypeptide reads, in one-letter code: Ankyrin repeat and death domain-containing protein 1B (528 aa).

10 ANK repeats span residues 67–96 (PNERSFQNAAKSNNLDLMEKLFEKKVNINV), 100–129 (MNRTALHFAVGRNHLSAVDFLLKHKARVDV), 133–162 (HGLTVIHLAAWSGSLEVMLMLVKAGADQRA), 166–197 (DGMSALHFATQSNHVRIVEYLIQDLHLKDLNQ), 201–230 (KGRKPFLLAAERGHVEMIEKLTFLNLHTSE), 234–263 (GGNTALHLAAKHGHSPAVQVLLAQWQDINE), 267–296 (LNISSLQIATRNGHASLVNFLLSENVDLHQ), 300–329 (PKESPLHLVVINNHITVVNSLLSAQHDIDI), 333–362 (KQQTPLHVAADRGNVELVETLLKAGCDLKA), and 366–395 (QGKTALAVASRSNHSLVVGMLIKAERYYAW). The 89-residue stretch at 427–515 (TLLWDLAYHQ…KLAEKTRHFK (89 aa)) folds into the Death domain.

This chain is Ankyrin repeat and death domain-containing protein 1B (ANKDD1B), found in Homo sapiens (Human).